The sequence spans 277 residues: MNGEYKTLANKSFESNVLFFGQEACLPNYTYKGNNVRDSYVIHYIQEGKGTFAAANHPATVLKAGDIFILPKGTPCFYQADNDQPWKYFWIGFSAGIRIEAMLSGSLLAQKCYLRQVQNGHIYADLSELYKVLHIPNSLINDVLLGSLIYRLFYDLLRWYPADATNIKVKSTEQFNLAVSYLQENYSTGCTIMDLCHYLNLSRSYLYTLFKTHANTSPQKLLTKLRLEDAKQRLSTSNNSVQSIANMVGYKDSFTFSKAFKRYSGASPSYYRKSIGI.

Residues 176-274 (NLAVSYLQEN…GASPSYYRKS (99 aa)) enclose the HTH araC/xylS-type domain. 2 consecutive DNA-binding regions (H-T-H motif) follow at residues 193–214 (MDLCHYLNLSRSYLYTLFKTHA) and 241–264 (VQSIANMVGYKDSFTFSKAFKRYS).

Involved in the regulation of the raffinose-operon. The chain is Raffinose operon transcriptional regulatory protein RafR (rafR) from Pediococcus pentosaceus.